A 172-amino-acid polypeptide reads, in one-letter code: Phosphopantetheine adenylyltransferase (172 aa).

Thr14 lines the substrate pocket. Residues 14 to 15 (TF) and His22 contribute to the ATP site. Residues Lys46, Leu78, and Arg92 each coordinate substrate. Residues 93–95 (GLR), Glu103, and 128–134 (WLYISST) contribute to the ATP site.

It belongs to the bacterial CoaD family. As to quaternary structure, homohexamer. The cofactor is Mg(2+).

The protein localises to the cytoplasm. The enzyme catalyses (R)-4'-phosphopantetheine + ATP + H(+) = 3'-dephospho-CoA + diphosphate. It participates in cofactor biosynthesis; coenzyme A biosynthesis; CoA from (R)-pantothenate: step 4/5. Reversibly transfers an adenylyl group from ATP to 4'-phosphopantetheine, yielding dephospho-CoA (dPCoA) and pyrophosphate. This chain is Phosphopantetheine adenylyltransferase, found in Lawsonia intracellularis (strain PHE/MN1-00).